A 2554-amino-acid chain; its full sequence is Protein sevenless (2554 aa).

Over residues 1 to 10 (MTMFWQQNVD) the composition is skewed to polar residues. A disordered region spans residues 1-25 (MTMFWQQNVDHQSDEQDKQAKGAAP). Topologically, residues 1 to 2123 (MTMFWQQNVD…AEPFVSPEKR (2123 aa)) are extracellular. Residues 11–20 (HQSDEQDKQA) show a composition bias toward basic and acidic residues. The N-linked (GlcNAc...) asparagine glycan is linked to Asn30. The segment covering 51–70 (NQQAPGTSSSSSNSQNASPS) has biased composition (low complexity). A disordered region spans residues 51-75 (NQQAPGTSSSSSNSQNASPSKIVVR). N-linked (GlcNAc...) asparagine glycosylation occurs at Asn129. Residues 181-208 (SRPQSTMAHHPDDRDRDRDPSEEQHGVD) are disordered. Basic and acidic residues predominate over residues 189 to 208 (HHPDDRDRDRDPSEEQHGVD). The 94-residue stretch at 440–533 (APVIEHLMGL…GFVQTHSARN (94 aa)) folds into the Fibronectin type-III 1 domain. N-linked (GlcNAc...) asparagine glycosylation is found at Asn481, Asn505, Asn617, and Asn647. A Fibronectin type-III 2 domain is found at 824–924 (AGGKPHSLKA…EPLAARTWPL (101 aa)). A glycan (N-linked (GlcNAc...) asparagine) is linked at Asn966. Residues 1010–1053 (GRVYWTDLARNCVVRMDPWSGSRELLPVFEANFLALDPRQGHLY) form an LDL-receptor class B repeat. Fibronectin type-III domains are found at residues 1202–1290 (LPDS…TPPV) and 1294–1397 (QPRR…VAPE). Residues Asn1228, Asn1313, Asn1353, Asn1550, Asn1557, Asn1639, Asn1725, Asn1756, Asn1804, Asn1889, Asn1947, and Asn2073 are each glycosylated (N-linked (GlcNAc...) asparagine). Fibronectin type-III domains are found at residues 1801–1901 (PPRN…SFAE), 1902–1988 (LPEL…VYET), and 1995–2117 (QPGK…AEPF). A helical membrane pass occupies residues 2124-2147 (GSLVLAIIAPAAIVSSCVLALVLV). Over 2148–2554 (RKVQKRRLRA…LYANEGVSRL (407 aa)) the chain is Cytoplasmic. One can recognise a Protein kinase domain in the interval 2209–2485 (LKLLRFLGSG…RCYNTLHAIS (277 aa)). ATP-binding positions include 2215–2223 (LGSGAFGEV) and Lys2242. Residue Asp2343 is the Proton acceptor of the active site. A Phosphotyrosine; by autocatalysis modification is found at Tyr2380. Positions 2515–2527 (GQPLEEHREHNER) are enriched in basic and acidic residues. Positions 2515–2534 (GQPLEEHREHNERPEDENLT) are disordered.

The protein belongs to the protein kinase superfamily. Tyr protein kinase family. Insulin receptor subfamily. May form a complex with drk and Sos. Binds the phosphotyrosine interaction domain (PID) of Dab.

The protein resides in the cell membrane. The enzyme catalyses L-tyrosyl-[protein] + ATP = O-phospho-L-tyrosyl-[protein] + ADP + H(+). In terms of biological role, receptor for an extracellular signal required to instruct a cell to differentiate into an R7 photoreceptor. The ligand for sev is the boss (bride of sevenless) protein on the surface of the neighboring R8 cell. The sequence is that of Protein sevenless (sev) from Drosophila melanogaster (Fruit fly).